The following is a 410-amino-acid chain: Peptidase T (410 aa).

H79 lines the Zn(2+) pocket. D81 is an active-site residue. Zn(2+) is bound at residue D142. E176 (proton acceptor) is an active-site residue. Zn(2+)-binding residues include E177, D199, and H381.

This sequence belongs to the peptidase M20B family. Requires Zn(2+) as cofactor.

It localises to the cytoplasm. The catalysed reaction is Release of the N-terminal residue from a tripeptide.. In terms of biological role, cleaves the N-terminal amino acid of tripeptides. This Brevibacillus brevis (strain 47 / JCM 6285 / NBRC 100599) protein is Peptidase T.